Consider the following 137-residue polypeptide: Proofreading thioesterase EntH (137 aa).

E63 (nucleophile or proton acceptor) is an active-site residue.

It belongs to the thioesterase PaaI family. Homotetramer. Dimer of dimers. Interacts specifically with the aryl carrier protein (ArCP) domain of EntB.

The protein resides in the cytoplasm. Its pathway is siderophore biosynthesis; enterobactin biosynthesis. In terms of biological role, required for optimal enterobactin synthesis. Acts as a proofreading enzyme that prevents EntB misacylation by hydrolyzing the thioester bound existing between EntB and wrongly charged molecules. This chain is Proofreading thioesterase EntH, found in Salmonella typhimurium (strain LT2 / SGSC1412 / ATCC 700720).